A 643-amino-acid polypeptide reads, in one-letter code: Extracellular metalloproteinase 4 (643 aa).

The signal sequence occupies residues 1–18 (MHGLMLAGLLALPLSVLG). A propeptide spanning residues 19-254 (HPTESHSSGI…VHSVVDYVSA (236 aa)) is cleaved from the precursor. Basic and acidic residues predominate over residues 47–57 (TKSDAVPKQDG). Residues 47 to 73 (TKSDAVPKQDGESFTTSSTGNDNSSSG) are disordered. Residues 61–73 (TTSSTGNDNSSSG) show a composition bias toward low complexity. Residues Asn-271 and Asn-420 are each glycosylated (N-linked (GlcNAc...) asparagine). His-437 is a Zn(2+) binding site. Residue Glu-438 is part of the active site. His-441 contributes to the Zn(2+) binding site. Asn-603 and Asn-629 each carry an N-linked (GlcNAc...) asparagine glycan.

Belongs to the peptidase M36 family. The cofactor is Zn(2+).

The protein resides in the secreted. In terms of biological role, secreted metalloproteinase probably acting as a virulence factor. In Trichophyton rubrum (Athlete's foot fungus), this protein is Extracellular metalloproteinase 4 (MEP4).